A 356-amino-acid polypeptide reads, in one-letter code: Histidinol-phosphate aminotransferase (356 aa).

Residue Lys214 is modified to N6-(pyridoxal phosphate)lysine.

It belongs to the class-II pyridoxal-phosphate-dependent aminotransferase family. Histidinol-phosphate aminotransferase subfamily. Homodimer. Pyridoxal 5'-phosphate serves as cofactor.

It catalyses the reaction L-histidinol phosphate + 2-oxoglutarate = 3-(imidazol-4-yl)-2-oxopropyl phosphate + L-glutamate. It functions in the pathway amino-acid biosynthesis; L-histidine biosynthesis; L-histidine from 5-phospho-alpha-D-ribose 1-diphosphate: step 7/9. In Shigella dysenteriae serotype 1 (strain Sd197), this protein is Histidinol-phosphate aminotransferase.